A 250-amino-acid chain; its full sequence is tRNA (guanine-N(7)-)-methyltransferase (250 aa).

Residues Glu79, Glu104, Asp131, and Asp154 each coordinate S-adenosyl-L-methionine. The active site involves Asp154. Residues Lys158, Asp190, and 228 to 231 (TKFE) contribute to the substrate site.

It belongs to the class I-like SAM-binding methyltransferase superfamily. TrmB family.

It catalyses the reaction guanosine(46) in tRNA + S-adenosyl-L-methionine = N(7)-methylguanosine(46) in tRNA + S-adenosyl-L-homocysteine. Its pathway is tRNA modification; N(7)-methylguanine-tRNA biosynthesis. In terms of biological role, catalyzes the formation of N(7)-methylguanine at position 46 (m7G46) in tRNA. The protein is tRNA (guanine-N(7)-)-methyltransferase of Actinobacillus pleuropneumoniae serotype 5b (strain L20).